Reading from the N-terminus, the 1080-residue chain is Zorya protein ZorD (1080 aa).

One can recognise a Helicase ATP-binding domain in the interval 596 to 779 (LRSPEETAGC…WSLFDFAQPG (184 aa)). In terms of domain architecture, Helicase C-terminal spans 904–1069 (KLNWLLKILA…DMLCATPDLS (166 aa)).

In terms of biological role, component of antiviral defense system Zorya type I, composed of ZorA, ZorB, ZorC and ZorD. Expression of Zorya type I in E.coli (strain MG1655) confers 10,000-fold resistance to phage SECphi27, 100-fold resistance to lambda, and 10-fold resistance to T7. While most T7 infected Zorya-containing cells undergo abortive infection, a minority produce viable phage progeny. These eventually accumulate to a high multiplicity of infection, leading to culture collapse by 2 hours after initial infection. ZorA and ZorB probably assemble in the cell inner membrane and exert their effect there. This may have ATPase activity. The sequence is that of Zorya protein ZorD from Escherichia coli O139:H28 (strain E24377A / ETEC).